The following is a 315-amino-acid chain: PIH1 domain-containing protein 2 (315 aa).

This sequence belongs to the PIH1 family.

The polypeptide is PIH1 domain-containing protein 2 (Pih1d2) (Mus musculus (Mouse)).